Consider the following 276-residue polypeptide: Homeobox-leucine zipper protein HOX11 (276 aa).

A disordered region spans residues 1 to 92 (MVDGHLEAST…DDGGSARKKL (92 aa)). Residues 39–48 (LSSSPNNSAG) show a composition bias toward polar residues. The segment covering 58–73 (HGLGGNDAAPGGGGGD) has biased composition (gly residues). Positions 87 to 146 (SARKKLRLSKEQSAFLEESFKEHSTLNPKQKLALAKQLNLRPRQVEVWFQNRRARTKLKQ) form a DNA-binding region, homeobox. The segment at 145–189 (KQTEVDCEYLKRCCETLTEENRRLQKELAELRALKTVHPFYMHLP) is leucine-zipper. The disordered stretch occupies residues 214–244 (AATSSTAAPPAAPSSGGIAATSSSSAAAAAA).

The protein belongs to the HD-ZIP homeobox family. Class II subfamily. In terms of tissue distribution, expressed in stems, leaf sheaths and blades and panicles.

The protein localises to the nucleus. Probable transcription factor. In Oryza sativa subsp. indica (Rice), this protein is Homeobox-leucine zipper protein HOX11 (HOX11).